Reading from the N-terminus, the 277-residue chain is MISSIKPVLPSLTAIVGIGIYFAIWWALNGVFNNYNKKVLNAFPYLWLTLTLSLACGSLMMLVSWVALAHTIGHVEAIVSMSKVVVSFTHTSSKAVRQPLASLSQASSWARCALAAVMELNFNMIGFMGAMISNLAFVFRNIFSKKGMKGKSVSVMNYYACLSMMSLLIVTPFANSVEGPQMWADGWQNDVSKSDQTLSSKWVVAHSVFYHLYNQVSYIPRCLNHHLPNPLKHVNALGAAIAILGTFIYSQIKNRVKKNHILLVLCLGMLEPLVITL.

The next 5 helical transmembrane spans lie at 8 to 28 (VLPS…WWAL), 46 to 66 (LWLT…VSWV), 124 to 143 (MIGF…RNIF), 153 to 173 (VSVM…VTPF), and 230 to 250 (PLKH…FIYS).

Belongs to the TPT transporter family. GPT (TC 2.A.7.9) subfamily.

The protein localises to the membrane. This is Putative glucose-6-phosphate/phosphate-translocator-like protein 1 from Arabidopsis thaliana (Mouse-ear cress).